The sequence spans 488 residues: Probable glycine dehydrogenase (decarboxylating) subunit 2 (488 aa).

Residue lysine 274 is modified to N6-(pyridoxal phosphate)lysine.

The protein belongs to the GcvP family. C-terminal subunit subfamily. The glycine cleavage system is composed of four proteins: P, T, L and H. In this organism, the P 'protein' is a heterodimer of two subunits. It depends on pyridoxal 5'-phosphate as a cofactor.

The catalysed reaction is N(6)-[(R)-lipoyl]-L-lysyl-[glycine-cleavage complex H protein] + glycine + H(+) = N(6)-[(R)-S(8)-aminomethyldihydrolipoyl]-L-lysyl-[glycine-cleavage complex H protein] + CO2. Functionally, the glycine cleavage system catalyzes the degradation of glycine. The P protein binds the alpha-amino group of glycine through its pyridoxal phosphate cofactor; CO(2) is released and the remaining methylamine moiety is then transferred to the lipoamide cofactor of the H protein. This chain is Probable glycine dehydrogenase (decarboxylating) subunit 2, found in Listeria monocytogenes serovar 1/2a (strain ATCC BAA-679 / EGD-e).